A 424-amino-acid polypeptide reads, in one-letter code: Histidine--tRNA ligase (424 aa).

The protein belongs to the class-II aminoacyl-tRNA synthetase family. As to quaternary structure, homodimer.

Its subcellular location is the cytoplasm. It carries out the reaction tRNA(His) + L-histidine + ATP = L-histidyl-tRNA(His) + AMP + diphosphate + H(+). The polypeptide is Histidine--tRNA ligase (Salmonella heidelberg (strain SL476)).